The sequence spans 945 residues: Oxysterol-binding protein homolog C23H4.01c (945 aa).

Residues 1 to 131 form the GOLD domain; that stretch reads METVEIRSKS…PKTVTFLLTA (131 aa). In terms of domain architecture, PH spans 149 to 243; that stretch reads KQIISGTLLK…WCNALEKAKN (95 aa). 3 positions are modified to phosphoserine: Ser-288, Ser-419, and Ser-421. 2 disordered regions span residues 396–555 and 846–894; these read ESGA…LPHS and LEKD…MEEK. Low complexity predominate over residues 443-454; the sequence is TSSISDTSSNSS. The span at 460–470 shows a compositional bias: polar residues; that stretch reads LNATSLASTVD. Over residues 482–499 the composition is skewed to basic and acidic residues; the sequence is ESNKENDIKRKQPFHDLM. The residue at position 503 (Ser-503) is a Phosphoserine.

The protein belongs to the OSBP family.

The protein localises to the cytoplasm. The sequence is that of Oxysterol-binding protein homolog C23H4.01c from Schizosaccharomyces pombe (strain 972 / ATCC 24843) (Fission yeast).